Here is a 150-residue protein sequence, read N- to C-terminus: Sulfur-rich protein, serovar D (150 aa).

2 consecutive transmembrane segments (helical) span residues 41–61 (VGLV…LVSA) and 67–87 (AIYL…VGIL).

The protein resides in the membrane. This chain is Sulfur-rich protein, serovar D (srp), found in Chlamydia trachomatis serovar D (strain ATCC VR-885 / DSM 19411 / UW-3/Cx).